The chain runs to 244 residues: Glucosamine-6-phosphate deaminase (244 aa).

The Proton acceptor; for enolization step role is filled by D67. The For ring-opening step role is filled by N133. H135 serves as the catalytic Proton acceptor; for ring-opening step. The active-site For ring-opening step is E140.

This sequence belongs to the glucosamine/galactosamine-6-phosphate isomerase family. NagB subfamily.

The catalysed reaction is alpha-D-glucosamine 6-phosphate + H2O = beta-D-fructose 6-phosphate + NH4(+). It participates in amino-sugar metabolism; N-acetylneuraminate degradation; D-fructose 6-phosphate from N-acetylneuraminate: step 5/5. Functionally, catalyzes the reversible isomerization-deamination of glucosamine 6-phosphate (GlcN6P) to form fructose 6-phosphate (Fru6P) and ammonium ion. This is Glucosamine-6-phosphate deaminase from Mycoplasma mycoides subsp. mycoides SC (strain CCUG 32753 / NCTC 10114 / PG1).